The chain runs to 267 residues: Imidazole glycerol phosphate synthase subunit HisF (267 aa).

Active-site residues include Asp22 and Asp141.

It belongs to the HisA/HisF family. Heterodimer of HisH and HisF.

The protein resides in the cytoplasm. The enzyme catalyses 5-[(5-phospho-1-deoxy-D-ribulos-1-ylimino)methylamino]-1-(5-phospho-beta-D-ribosyl)imidazole-4-carboxamide + L-glutamine = D-erythro-1-(imidazol-4-yl)glycerol 3-phosphate + 5-amino-1-(5-phospho-beta-D-ribosyl)imidazole-4-carboxamide + L-glutamate + H(+). It functions in the pathway amino-acid biosynthesis; L-histidine biosynthesis; L-histidine from 5-phospho-alpha-D-ribose 1-diphosphate: step 5/9. IGPS catalyzes the conversion of PRFAR and glutamine to IGP, AICAR and glutamate. The HisF subunit catalyzes the cyclization activity that produces IGP and AICAR from PRFAR using the ammonia provided by the HisH subunit. The chain is Imidazole glycerol phosphate synthase subunit HisF from Mycobacterium bovis (strain ATCC BAA-935 / AF2122/97).